A 299-amino-acid polypeptide reads, in one-letter code: Glycine--tRNA ligase alpha subunit (299 aa).

The protein belongs to the class-II aminoacyl-tRNA synthetase family. In terms of assembly, tetramer of two alpha and two beta subunits.

The protein localises to the cytoplasm. It carries out the reaction tRNA(Gly) + glycine + ATP = glycyl-tRNA(Gly) + AMP + diphosphate. The polypeptide is Glycine--tRNA ligase alpha subunit (Laribacter hongkongensis (strain HLHK9)).